Consider the following 605-residue polypeptide: MDPAEAVLQEKALKFMCSMPRSLWLGCSSLADSMPSLRCLYNPGTGALTAFQNSSEREDCNNGEPPRKIIPEKNSLRQTYNSCARLCINQETVCLTSTAMKTENCVAKAKLANGTSSMIVPKQRKLSASYEKEKELCVKYFEQWSESDQVEFVEHLISQMCHYQHGHINSYLKPMLQRDFITALPARGLDHIAENILSYLDAKSLCAAELVCKEWYRVTSDGMLWKKLIERMVRTDSLWRGLAERRGWGQYLFKNKPPDENAPPNSFYRALYPKIIQDIETIESNWRCGRHSLQRIHCRSETSKGVYCLQYDDQKIVSGLRDNTIKIWDKSTLECKRILTGHTGSVLCLQYDERVIITGSSDSTVRVWDVNAGEMLNTLIHHCEAVLHLRFNNGMMVTCSKDRSIAVWDMASPTDITLRRVLVGHRAAVNVVDFDDKYIVSASGDRTIKVWNTSTCEFVRTLNGHKRGIACLQYRDRLVVSGSSDNTIRLWDIECGACLRVLEGHEELVRCIRFDNKRIVSGAYDGKIKVWDLMAALDPRAPAGTLCLRTLVEHSGRVFRLQFDEFQIVSSSHDDTILIWDFLNDPAAHAEPPRSPSRTYTYISR.

Residues A128–Q177 are homodimerization domain D. Residues T182–L228 enclose the F-box domain. Residues D190–L228 form a required for down-regulation of SNAI1 region. WD repeat units lie at residues E301 to I338, G341 to T378, H381 to L418, G424 to T461, G464 to E503, H505 to A541, and E553 to A590.

As to quaternary structure, homodimer. Self-associates. Component of the SCF(BTRC) complex, composed of SKP1, CUL1 and BTRC. Direct interaction with SKP1 with SKP1 occurs via the F-box domain. Interacts with phosphorylated ubiquitination substrates SMAD3 and SMAD4. Interacts with phosphorylated ubiquitination substrates CTNNB1, NFKBIA, NFKBIB, NFKBIE, NFKB1/nuclear factor NF-kappa-B p105 subunit, ATF4, CDC25A, DLG1, FBXO5 and SNAI1; the interaction requires the phosphorylation of the 2 serine residues in the substrate destruction motif D-S-G-X(2,3,4)-S. Binds UBQLN1. Interacts with CDC34 and UBE2R2. Interacts with FBXW11. Interacts with CUL4A and DDB1. Part of a SCF(BTRC)-like complex lacking CUL1, which is associated with phosphorylated NKBIA and RELA; RELA interacts directly with NFKBIA. Interacts with the phosphorylated form of GLI3. Interacts with CLU. Interacts with PER1 (phosphorylated), PER2 (phosphorylated) and PER3. Interacts with phosphorylated ubiquitination substrate CEP68. Interacts with ZC3H12A; this interaction occurs when ZC3H12A is phosphorylated in a IKBKB/IKKB-dependent manner. Interacts with HSF1; this interaction occurs during mitosis and induces HSF1 ubiquitin-dependent degradation, a process inhibited by CDC20. Interacts with NFE2L1. Interacts with INAVA. Interacts with IL10RA; this interaction leads to IL10RA ubiquitination and subsequent degradation. Interacts with REST. Interacts with KLF4; this interaction leads to KLF4 ubiquitination and subsequent degradation. Interacts with UBR2, as part of a SCF(BTRC) complex; the interaction mediates 'Lys-48'-linked ubiquitination of UBR2 and is regulated by DUSP22 in the T-cell receptor signaling pathway. Post-translationally, ubiquitinated via 'Lys-11'-linked polyubiquitin by some cullin-5-RING E3 ubiquitin-protein ligase complex (ECS complex), leading to its degradation. Deubiquitinated by OTUD5, promoting its stability. Expressed in heart, brain, liver, skeletal muscle and, most strongly, in testis.

It localises to the cytoplasm. The protein resides in the nucleus. The protein operates within protein modification; protein ubiquitination. Functionally, substrate recognition component of a SCF (SKP1-CUL1-F-box protein) E3 ubiquitin-protein ligase complex which mediates the ubiquitination and subsequent proteasomal degradation of target proteins. Recognizes and binds to phosphorylated target proteins. SCF(BTRC) mediates the ubiquitination of phosphorylated NFKB, ATF4, CDC25A, DLG1, FBXO5, PER1, SMAD3, SMAD4, SNAI1 and probably NFKB2. SCF(BTRC) mediates the ubiquitination of CTNNB1 and participates in Wnt signaling. SCF(BTRC) mediates the ubiquitination of NFKBIA, NFKBIB and NFKBIE; the degradation frees the associated NFKB1 to translocate into the nucleus and to activate transcription. Ubiquitination of NFKBIA occurs at 'Lys-21' and 'Lys-22'. The SCF(FBXW11) complex also regulates NF-kappa-B by mediating ubiquitination of phosphorylated NFKB1: specifically ubiquitinates the p105 form of NFKB1, leading to its degradation. SCF(BTRC) mediates the ubiquitination of CEP68; this is required for centriole separation during mitosis. SCF(BTRC) mediates the ubiquitination and subsequent degradation of nuclear NFE2L1. Has an essential role in the control of the clock-dependent transcription via degradation of phosphorylated PER1 and PER2. May be involved in ubiquitination and subsequent proteasomal degradation through a DBB1-CUL4 E3 ubiquitin-protein ligase. Required for activation of NFKB-mediated transcription by IL1B, MAP3K14, MAP3K1, IKBKB and TNF. Required for proteolytic processing of GLI3. Mediates ubiquitination of REST, thereby leading to its proteasomal degradation. SCF(BTRC) mediates the ubiquitination and subsequent proteasomal degradation of KLF4; thereby negatively regulating cell pluripotency maintenance and embryogenesis. SCF(BTRC) acts as a regulator of mTORC1 signaling pathway by catalyzing ubiquitination and subsequent proteasomal degradation of phosphorylated DEPTOR, TFE3 and MITF. SCF(BTRC) directs 'Lys-48'-linked ubiquitination of UBR2 in the T-cell receptor signaling pathway. This Mus musculus (Mouse) protein is F-box/WD repeat-containing protein 1A.